The sequence spans 448 residues: Glutamyl-tRNA reductase (448 aa).

Substrate-binding positions include 52 to 55 (TCNR), Ser-105, 110 to 112 (EDQ), and Gln-116. Catalysis depends on Cys-53, which acts as the Nucleophile. Residue 184–189 (GAGEMG) coordinates NADP(+). The disordered stretch occupies residues 406-435 (DPDFGGPDQATPPEFTKGMSVEDIPDGMRD).

It belongs to the glutamyl-tRNA reductase family. Homodimer.

It carries out the reaction (S)-4-amino-5-oxopentanoate + tRNA(Glu) + NADP(+) = L-glutamyl-tRNA(Glu) + NADPH + H(+). It participates in porphyrin-containing compound metabolism; protoporphyrin-IX biosynthesis; 5-aminolevulinate from L-glutamyl-tRNA(Glu): step 1/2. In terms of biological role, catalyzes the NADPH-dependent reduction of glutamyl-tRNA(Glu) to glutamate 1-semialdehyde (GSA). This Haloarcula marismortui (strain ATCC 43049 / DSM 3752 / JCM 8966 / VKM B-1809) (Halobacterium marismortui) protein is Glutamyl-tRNA reductase.